We begin with the raw amino-acid sequence, 518 residues long: Glutamate--cysteine ligase (518 aa).

Belongs to the glutamate--cysteine ligase type 1 family. Type 1 subfamily.

It carries out the reaction L-cysteine + L-glutamate + ATP = gamma-L-glutamyl-L-cysteine + ADP + phosphate + H(+). It functions in the pathway sulfur metabolism; glutathione biosynthesis; glutathione from L-cysteine and L-glutamate: step 1/2. This is Glutamate--cysteine ligase from Cronobacter sakazakii (strain ATCC BAA-894) (Enterobacter sakazakii).